The following is a 372-amino-acid chain: L-lysine 4-hydroxylase (372 aa).

Positions 176, 178, and 312 each coordinate Fe cation.

This sequence belongs to the clavaminate synthase family. Requires Fe(2+) as cofactor.

It carries out the reaction L-lysine + 2-oxoglutarate + O2 = (4R)-4-hydroxy-L-lysine + succinate + CO2. Its function is as follows. Alpha-ketoglutarate-dependent dioxygenase that in vitro catalyzes the regio- and stereoselective hydroxylation of L-lysine, leading to (4R)-4-hydroxy-L-lysine. This is L-lysine 4-hydroxylase from Flavobacterium sp. (strain CF136).